The chain runs to 470 residues: Pre-mycofactocin glycosyltransferase (470 aa).

A helical transmembrane segment spans residues L315–G335.

This sequence belongs to the glycosyltransferase 2 family.

Its subcellular location is the cell membrane. Functionally, involved in the biosynthesis of the enzyme cofactor mycofactocin (MFT). Acts as a glycosyltransferase that catalyzes the oligoglycosylation of pre-mycofactocin (PMFT), adding up to nine beta-1,4-linked glucose residues. Is required for the in vivo ethanol assimilation in M.smegmatis. The chain is Pre-mycofactocin glycosyltransferase (mftF) from Mycobacterium tuberculosis (strain CDC 1551 / Oshkosh).